A 772-amino-acid polypeptide reads, in one-letter code: Phosphoribosylformylglycinamidine synthase subunit PurL (772 aa).

The active site involves His-62. Tyr-65 and Lys-109 together coordinate ATP. Glu-111 is a binding site for Mg(2+). Residues 112-115 and Arg-134 contribute to the substrate site; that span reads SHNH. His-113 functions as the Proton acceptor in the catalytic mechanism. Asp-135 serves as a coordination point for Mg(2+). Gln-259 lines the substrate pocket. Residue Asp-287 participates in Mg(2+) binding. 331 to 333 serves as a coordination point for substrate; that stretch reads ESQ. Positions 519 and 556 each coordinate ATP. Asn-557 is a binding site for Mg(2+). Substrate is bound at residue Ser-559.

The protein belongs to the FGAMS family. As to quaternary structure, monomer. Part of the FGAM synthase complex composed of 1 PurL, 1 PurQ and 2 PurS subunits.

Its subcellular location is the cytoplasm. The enzyme catalyses N(2)-formyl-N(1)-(5-phospho-beta-D-ribosyl)glycinamide + L-glutamine + ATP + H2O = 2-formamido-N(1)-(5-O-phospho-beta-D-ribosyl)acetamidine + L-glutamate + ADP + phosphate + H(+). It participates in purine metabolism; IMP biosynthesis via de novo pathway; 5-amino-1-(5-phospho-D-ribosyl)imidazole from N(2)-formyl-N(1)-(5-phospho-D-ribosyl)glycinamide: step 1/2. Its function is as follows. Part of the phosphoribosylformylglycinamidine synthase complex involved in the purines biosynthetic pathway. Catalyzes the ATP-dependent conversion of formylglycinamide ribonucleotide (FGAR) and glutamine to yield formylglycinamidine ribonucleotide (FGAM) and glutamate. The FGAM synthase complex is composed of three subunits. PurQ produces an ammonia molecule by converting glutamine to glutamate. PurL transfers the ammonia molecule to FGAR to form FGAM in an ATP-dependent manner. PurS interacts with PurQ and PurL and is thought to assist in the transfer of the ammonia molecule from PurQ to PurL. This chain is Phosphoribosylformylglycinamidine synthase subunit PurL, found in Leifsonia xyli subsp. xyli (strain CTCB07).